Consider the following 185-residue polypeptide: uncharacterized protein (185 aa).

This is an uncharacterized protein from Escherichia coli (strain K12).